Here is a 206-residue protein sequence, read N- to C-terminus: CASP-like protein 4B2 (206 aa).

Low complexity-rich tracts occupy residues 1–12 (MAMVPADADAAA) and 24–36 (SSQN…AAAA). The interval 1–42 (MAMVPADADAAAKPPPDVEKPDYSSQNGAPNSAAAAAGGGGG) is disordered. Over 1–60 (MAMVPADADAAAKPPPDVEKPDYSSQNGAPNSAAAAAGGGGGGVVDSVVARWRREDMLDK) the chain is Cytoplasmic. A helical transmembrane segment spans residues 61-81 (SPLALHAAAAAFAFVALVLVA). Topologically, residues 82–99 (SNQHGDWMEFDRYQEYRY) are extracellular. A helical transmembrane segment spans residues 100–120 (LLAIAALAFAYSLAQALRHAL). The Cytoplasmic segment spans residues 121 to 138 (RMRRGVDPVPTASGRLLD). The helical transmembrane segment at 139–159 (FASDQVVAYLLMSALSAATPI) threads the bilayer. At 160 to 174 (TNRMRSAVINRFTDT) the chain is on the extracellular side. The chain crosses the membrane as a helical span at residues 175 to 195 (TAAAISMAFLAFVSLALSAIV). The Cytoplasmic portion of the chain corresponds to 196 to 206 (SGYKLSKQTYM).

Belongs to the Casparian strip membrane proteins (CASP) family. As to quaternary structure, homodimer and heterodimers.

It localises to the cell membrane. This Oryza sativa subsp. japonica (Rice) protein is CASP-like protein 4B2.